Reading from the N-terminus, the 341-residue chain is Ribosomal RNA small subunit methyltransferase C (341 aa).

Belongs to the methyltransferase superfamily. RsmC family. As to quaternary structure, monomer.

It is found in the cytoplasm. It carries out the reaction guanosine(1207) in 16S rRNA + S-adenosyl-L-methionine = N(2)-methylguanosine(1207) in 16S rRNA + S-adenosyl-L-homocysteine + H(+). In terms of biological role, specifically methylates the guanine in position 1207 of 16S rRNA in the 30S particle. The polypeptide is Ribosomal RNA small subunit methyltransferase C (Shewanella halifaxensis (strain HAW-EB4)).